We begin with the raw amino-acid sequence, 520 residues long: Acetylcholine receptor subunit delta (520 aa).

A signal peptide spans 1-24 (MAGPVLTLGLLAALVVCALPGSWG). The Extracellular portion of the chain corresponds to 25–248 (LNEEQRLIQH…VTFYLIIRRK (224 aa)). N-linked (GlcNAc...) asparagine glycosylation is found at N100, N167, and N193. C154 and C168 form a disulfide bridge. Helical transmembrane passes span 249–273 (PLFYIINILVPCVLISFMINLVFYL), 281–299 (TSVAISVLLAQSVFLLLIS), and 315–336 (FLLFGMVLVTMVVVICVIVLNI). The Cytoplasmic portion of the chain corresponds to 337 to 474 (HFRTPSTHVL…WNQVARTVDR (138 aa)). A Phosphotyrosine; by Tyr-kinases modification is found at Y393. Residues 475-493 (LCLFVVTPVMVVGTAWIFL) form a helical membrane-spanning segment.

It belongs to the ligand-gated ion channel (TC 1.A.9) family. Acetylcholine receptor (TC 1.A.9.1) subfamily. Delta/CHRND sub-subfamily. In terms of assembly, pentamer of two alpha chains, and one each of the beta, delta, and gamma (in immature muscle) or epsilon (in mature muscle) chains. The muscle heteropentamer composed of alpha-1, beta-1, delta, epsilon subunits interacts with the alpha-conotoxin ImII.

It is found in the postsynaptic cell membrane. It localises to the cell membrane. The enzyme catalyses K(+)(in) = K(+)(out). It catalyses the reaction Na(+)(in) = Na(+)(out). Its function is as follows. After binding acetylcholine, the AChR responds by an extensive change in conformation that affects all subunits and leads to opening of an ion-conducting channel across the plasma membrane. This Mus musculus (Mouse) protein is Acetylcholine receptor subunit delta (Chrnd).